Reading from the N-terminus, the 146-residue chain is Hemoglobin subunit beta (146 aa).

Val1 carries the N-acetylvaline modification. The Globin domain occupies 2–146; it reads HLTGEEKAAV…VATALAHKYH (145 aa). At Thr12 the chain carries Phosphothreonine. Ser44 bears the Phosphoserine mark. Lys59 is subject to N6-acetyllysine. His63 is a binding site for heme b. An N6-acetyllysine modification is found at Lys82. His92 serves as a coordination point for heme b. Cys93 is subject to S-nitrosocysteine. Lys144 is modified (N6-acetyllysine).

This sequence belongs to the globin family. In terms of assembly, heterotetramer of two alpha chains and two beta chains. In terms of tissue distribution, red blood cells.

Its function is as follows. Involved in oxygen transport from the lung to the various peripheral tissues. This Macroderma gigas (Australian ghost bat) protein is Hemoglobin subunit beta (HBB).